A 309-amino-acid chain; its full sequence is tRNA pseudouridine synthase B (309 aa).

Aspartate 52 (nucleophile) is an active-site residue.

Belongs to the pseudouridine synthase TruB family. Type 1 subfamily.

The catalysed reaction is uridine(55) in tRNA = pseudouridine(55) in tRNA. Responsible for synthesis of pseudouridine from uracil-55 in the psi GC loop of transfer RNAs. This Leptospira interrogans serogroup Icterohaemorrhagiae serovar Lai (strain 56601) protein is tRNA pseudouridine synthase B.